Consider the following 156-residue polypeptide: ATP synthase subunit b (156 aa).

Residues Ala-11–Ala-31 traverse the membrane as a helical segment.

Belongs to the ATPase B chain family. F-type ATPases have 2 components, F(1) - the catalytic core - and F(0) - the membrane proton channel. F(1) has five subunits: alpha(3), beta(3), gamma(1), delta(1), epsilon(1). F(0) has three main subunits: a(1), b(2) and c(10-14). The alpha and beta chains form an alternating ring which encloses part of the gamma chain. F(1) is attached to F(0) by a central stalk formed by the gamma and epsilon chains, while a peripheral stalk is formed by the delta and b chains.

Its subcellular location is the cell inner membrane. F(1)F(0) ATP synthase produces ATP from ADP in the presence of a proton or sodium gradient. F-type ATPases consist of two structural domains, F(1) containing the extramembraneous catalytic core and F(0) containing the membrane proton channel, linked together by a central stalk and a peripheral stalk. During catalysis, ATP synthesis in the catalytic domain of F(1) is coupled via a rotary mechanism of the central stalk subunits to proton translocation. In terms of biological role, component of the F(0) channel, it forms part of the peripheral stalk, linking F(1) to F(0). The sequence is that of ATP synthase subunit b from Psychromonas ingrahamii (strain DSM 17664 / CCUG 51855 / 37).